A 480-amino-acid chain; its full sequence is Altronate oxidoreductase (480 aa).

19–30 (ILQFGEGNFLRG) provides a ligand contact to NAD(+).

It belongs to the mannitol dehydrogenase family. UxaB subfamily.

It carries out the reaction D-altronate + NAD(+) = keto-D-tagaturonate + NADH + H(+). It functions in the pathway carbohydrate metabolism; pentose and glucuronate interconversion. The sequence is that of Altronate oxidoreductase from Bacillus subtilis (strain 168).